Here is a 62-residue protein sequence, read N- to C-terminus: uncharacterized protein (62 aa).

This is an uncharacterized protein from Solanum tuberosum (Potato).